We begin with the raw amino-acid sequence, 721 residues long: MATILFKVIMMKELILLEEGWSVMKTGVAKLQRILEDLSEPPFDPGQYINLYTIIYDMCLQQPPNDYSQELYNKYRGVVDHYNKETVLPSMRERHGEYMLRELVKRWANHKILVRWLSRFCFYLDRFYVARRGLPTLNDVGFTSFHDLVYQEIQSEAKDVLLALIHKEREGEQIDRTLVKNVIDVYCGNGVGQMVIYEEDFESFLLQDTASYYSRKASRWSQEDSCPDYMLKAEECLKLEKERVTNYLHSTTEPKLVEKVQNELLVVVAKQLIENEHSGCLALLRDDKMGDLSRMYRLYRLIPQGLEPIADLFKQHVTAEGNALIKQAADAATNQDASASQVLVRKEIELHDKYMVYVDECFQKHSLFHKLLKEAFEVFCNKTVAGASSAEILATYCDNILKTRGGSEKLSDEATEITLEKVVNLLVYISDKDLFAEFYRKKQARRLLFDRSGIMKEVTDITLARELQTNFVDYLSANMTTKLGIDFTVTVLTTGFWPSYKTTDLNLPTEMVNCVEAFKVFYGTKTNSRRLSWIYSLGTCHILGKFEKKTMELVVSTYQAAVLLLFNNAERLSYTEISEQLNLSHEDLVRLLHSLSCLKYKILIKEPMSRTISKTDTFEFNSKFTDKMRKIRVPLPPMDERKKVVEDVDKDRRYAIDAALVRIMKSRKVLAHQQLVSECVEHLSKMFKPDIKMIKKRIEDLINRDYLERDTENANTFKYVA.

Residues 651 to 713 (DRRYAIDAAL…RDYLERDTEN (63 aa)) enclose the Cullin neddylation domain.

The protein belongs to the cullin family.

This chain is Putative cullin-like protein 1, found in Arabidopsis thaliana (Mouse-ear cress).